A 232-amino-acid polypeptide reads, in one-letter code: 5'-methylthioadenosine/S-adenosylhomocysteine nucleosidase (232 aa).

E12 functions as the Proton acceptor in the catalytic mechanism. Substrate contacts are provided by residues G78, I152, and 173–174 (ME). The Proton donor role is filled by D197.

It belongs to the PNP/UDP phosphorylase family. MtnN subfamily. Homodimer.

The enzyme catalyses S-adenosyl-L-homocysteine + H2O = S-(5-deoxy-D-ribos-5-yl)-L-homocysteine + adenine. It catalyses the reaction S-methyl-5'-thioadenosine + H2O = 5-(methylsulfanyl)-D-ribose + adenine. The catalysed reaction is 5'-deoxyadenosine + H2O = 5-deoxy-D-ribose + adenine. The protein operates within amino-acid biosynthesis; L-methionine biosynthesis via salvage pathway; S-methyl-5-thio-alpha-D-ribose 1-phosphate from S-methyl-5'-thioadenosine (hydrolase route): step 1/2. Functionally, catalyzes the irreversible cleavage of the glycosidic bond in both 5'-methylthioadenosine (MTA) and S-adenosylhomocysteine (SAH/AdoHcy) to adenine and the corresponding thioribose, 5'-methylthioribose and S-ribosylhomocysteine, respectively. Also cleaves 5'-deoxyadenosine, a toxic by-product of radical S-adenosylmethionine (SAM) enzymes, into 5-deoxyribose and adenine. Thus, is required for in vivo function of the radical SAM enzymes biotin synthase and lipoic acid synthase, that are inhibited by 5'-deoxyadenosine accumulation. This is 5'-methylthioadenosine/S-adenosylhomocysteine nucleosidase from Salmonella arizonae (strain ATCC BAA-731 / CDC346-86 / RSK2980).